The chain runs to 209 residues: Kynurenine formamidase (209 aa).

Residue Phe-18 coordinates substrate. Zn(2+) contacts are provided by His-48, His-52, and Asp-54. His-58 acts as the Proton donor/acceptor in catalysis. 2 residues coordinate Zn(2+): His-160 and Glu-172.

Belongs to the Cyclase 1 superfamily. KynB family. As to quaternary structure, homodimer. Zn(2+) is required as a cofactor.

The enzyme catalyses N-formyl-L-kynurenine + H2O = L-kynurenine + formate + H(+). It participates in amino-acid degradation; L-tryptophan degradation via kynurenine pathway; L-kynurenine from L-tryptophan: step 2/2. Catalyzes the hydrolysis of N-formyl-L-kynurenine to L-kynurenine, the second step in the kynurenine pathway of tryptophan degradation. The chain is Kynurenine formamidase from Bordetella bronchiseptica (strain ATCC BAA-588 / NCTC 13252 / RB50) (Alcaligenes bronchisepticus).